The sequence spans 147 residues: Ubiquitin-like-conjugating enzyme ATG10 (147 aa).

Catalysis depends on C116, which acts as the Glycyl thioester intermediate.

Belongs to the ATG10 family. In terms of assembly, forms homooligomers. Interacts with ATG10. Interacts with ATG7 and ATG12.

It is found in the preautophagosomal structure membrane. E2-like enzyme required for the cytoplasm to vacuole transport (Cvt), autophagy and nucleophagy. Acts as an E2-like enzyme that catalyzes the conjugation of ATG12 to ATG5. ATG12 conjugation to ATG5 is required for proper localization of ATG8 to the preautophagosomal structure (PAS). Likely serves as an ATG5-recognition molecule. This Kluyveromyces marxianus (strain DMKU3-1042 / BCC 29191 / NBRC 104275) (Yeast) protein is Ubiquitin-like-conjugating enzyme ATG10.